The chain runs to 368 residues: tRNA-specific 2-thiouridylase MnmA (368 aa).

ATP-binding positions include 14 to 21 and Leu-40; that span reads AMSGGVDS. Cys-108 acts as the Nucleophile in catalysis. A disulfide bridge connects residues Cys-108 and Cys-204. Position 132 (Gly-132) interacts with ATP. The segment at 154-156 is interaction with tRNA; sequence KDQ. Cys-204 serves as the catalytic Cysteine persulfide intermediate.

It belongs to the MnmA/TRMU family.

It is found in the cytoplasm. It catalyses the reaction S-sulfanyl-L-cysteinyl-[protein] + uridine(34) in tRNA + AH2 + ATP = 2-thiouridine(34) in tRNA + L-cysteinyl-[protein] + A + AMP + diphosphate + H(+). Catalyzes the 2-thiolation of uridine at the wobble position (U34) of tRNA, leading to the formation of s(2)U34. The protein is tRNA-specific 2-thiouridylase MnmA of Rickettsia canadensis (strain McKiel).